A 335-amino-acid chain; its full sequence is Large ribosomal subunit protein uL3 (335 aa).

Disordered regions lie at residues 1-35 (MPQP…ADDG), 234-256 (IGNL…GQTG), and 312-335 (AVRP…SNQG). Residues 244 to 256 (RVRSTVPQQGQTG) are compositionally biased toward polar residues.

Belongs to the universal ribosomal protein uL3 family. Part of the 50S ribosomal subunit. Forms a cluster with proteins L14 and L24e.

One of the primary rRNA binding proteins, it binds directly near the 3'-end of the 23S rRNA, where it nucleates assembly of the 50S subunit. This chain is Large ribosomal subunit protein uL3, found in Halobacterium salinarum (strain ATCC 29341 / DSM 671 / R1).